A 246-amino-acid polypeptide reads, in one-letter code: DNA polymerase sliding clamp (246 aa).

Belongs to the PCNA family. As to quaternary structure, homotrimer. The subunits circularize to form a toroid; DNA passes through its center. Replication factor C (RFC) is required to load the toroid on the DNA.

Its function is as follows. Sliding clamp subunit that acts as a moving platform for DNA processing. Responsible for tethering the catalytic subunit of DNA polymerase and other proteins to DNA during high-speed replication. This chain is DNA polymerase sliding clamp, found in Methanocella arvoryzae (strain DSM 22066 / NBRC 105507 / MRE50).